A 391-amino-acid chain; its full sequence is Protein-glutamate methylesterase/protein-glutamine glutaminase of group 2 operon (391 aa).

A Response regulatory domain is found at 20 to 138 (RVMIVDDSVV…EPQAADIFKH (119 aa)). D71 bears the 4-aspartylphosphate mark. In terms of domain architecture, CheB-type methylesterase spans 196-383 (PTAPRVLLIG…PLNQIGPKVV (188 aa)). Catalysis depends on residues S207, H235, and D331.

The protein belongs to the CheB family. Post-translationally, phosphorylated by CheA. Phosphorylation of the N-terminal regulatory domain activates the methylesterase activity.

It localises to the cytoplasm. It catalyses the reaction [protein]-L-glutamate 5-O-methyl ester + H2O = L-glutamyl-[protein] + methanol + H(+). The enzyme catalyses L-glutaminyl-[protein] + H2O = L-glutamyl-[protein] + NH4(+). Functionally, involved in chemotaxis. Part of a chemotaxis signal transduction system that modulates chemotaxis in response to various stimuli. Catalyzes the demethylation of specific methylglutamate residues introduced into the chemoreceptors (methyl-accepting chemotaxis proteins or MCP) by CheR. Also mediates the irreversible deamidation of specific glutamine residues to glutamic acid. The sequence is that of Protein-glutamate methylesterase/protein-glutamine glutaminase of group 2 operon from Rhodopseudomonas palustris (strain ATCC BAA-98 / CGA009).